Reading from the N-terminus, the 730-residue chain is uncharacterized protein (730 aa).

Phosphoserine occurs at positions 82 and 89. 2 disordered regions span residues 82-114 (SPVR…TGSY) and 447-468 (NTNH…SKNE). A compositionally biased stretch (polar residues) spans 89–98 (SIQPSNSGKN). Residues 449 to 460 (NHNFTTNNNNEN) show a composition bias toward low complexity. Phosphoserine is present on residues serine 483 and serine 651.

This is an uncharacterized protein from Saccharomyces cerevisiae (strain ATCC 204508 / S288c) (Baker's yeast).